A 592-amino-acid polypeptide reads, in one-letter code: Aspartate--tRNA(Asp/Asn) ligase (592 aa).

Glu171 is an L-aspartate binding site. Positions 195–198 (QLFK) are aspartate. Arg217 provides a ligand contact to L-aspartate. Residues 217–219 (RDE) and Gln226 each bind ATP. His447 is a binding site for L-aspartate. Glu481 serves as a coordination point for ATP. Arg488 contacts L-aspartate. 533–536 (GLDR) lines the ATP pocket.

Belongs to the class-II aminoacyl-tRNA synthetase family. Type 1 subfamily. As to quaternary structure, homodimer.

Its subcellular location is the cytoplasm. It catalyses the reaction tRNA(Asx) + L-aspartate + ATP = L-aspartyl-tRNA(Asx) + AMP + diphosphate. In terms of biological role, aspartyl-tRNA synthetase with relaxed tRNA specificity since it is able to aspartylate not only its cognate tRNA(Asp) but also tRNA(Asn). Reaction proceeds in two steps: L-aspartate is first activated by ATP to form Asp-AMP and then transferred to the acceptor end of tRNA(Asp/Asn). In Psychromonas ingrahamii (strain DSM 17664 / CCUG 51855 / 37), this protein is Aspartate--tRNA(Asp/Asn) ligase.